Reading from the N-terminus, the 107-residue chain is Precursor of CEP14 (107 aa).

The first 21 residues, 1–21 (MAVRLIPTIWLFIVFAVIVSA), serve as a signal peptide directing secretion. Positions 22–92 (LPSLVSSRKL…GKLRSRHLST (71 aa)) are excised as a propeptide. The N-linked (GlcNAc...) asparagine glycan is linked to asparagine 39. A disordered region spans residues 43–76 (REEEKSHMPHVTKTSTLSALPKGKIPNSTPSKKG). Proline 101 and proline 103 each carry hydroxyproline.

This sequence belongs to the C-terminally encoded plant signaling peptide (CEP) family. Interacts with CEP receptors (e.g. CEPR1 and CEPR2). The mature small signaling peptide is generated by proteolytic processing of the longer precursor.

The protein resides in the secreted. It is found in the extracellular space. It localises to the apoplast. Its function is as follows. Extracellular signaling peptide that may regulate primary root growth rate and systemic nitrogen (N)-demand signaling. The protein is Precursor of CEP14 of Arabidopsis thaliana (Mouse-ear cress).